We begin with the raw amino-acid sequence, 511 residues long: 2-isopropylmalate synthase (511 aa).

In terms of domain architecture, Pyruvate carboxyltransferase spans 4–266 (IDIFDTTLRD…ETGIQLQEIK (263 aa)). Residues Asp-13, His-201, His-203, and Asn-237 each contribute to the Mn(2+) site. The regulatory domain stretch occupies residues 392-511 (ELKMVQVQYG…IKESLRAHPV (120 aa)).

The protein belongs to the alpha-IPM synthase/homocitrate synthase family. LeuA type 1 subfamily. In terms of assembly, homodimer. It depends on Mn(2+) as a cofactor.

The protein localises to the cytoplasm. The enzyme catalyses 3-methyl-2-oxobutanoate + acetyl-CoA + H2O = (2S)-2-isopropylmalate + CoA + H(+). Its pathway is amino-acid biosynthesis; L-leucine biosynthesis; L-leucine from 3-methyl-2-oxobutanoate: step 1/4. Functionally, catalyzes the condensation of the acetyl group of acetyl-CoA with 3-methyl-2-oxobutanoate (2-ketoisovalerate) to form 3-carboxy-3-hydroxy-4-methylpentanoate (2-isopropylmalate). The sequence is that of 2-isopropylmalate synthase from Lysinibacillus sphaericus (strain C3-41).